Reading from the N-terminus, the 580-residue chain is Tripeptidyl-peptidase sed5 (580 aa).

Positions 1 to 21 (MYPLDGSARPHPPGTTRLNSV) are disordered. Residues 181–567 (RAQRLIVAEL…RRTLEELRRI (387 aa)) enclose the Peptidase S53 domain. Residue N236 is glycosylated (N-linked (GlcNAc...) asparagine). Active-site charge relay system residues include E269, D273, and S479. Positions 523 and 524 each coordinate Ca(2+). N529 carries N-linked (GlcNAc...) asparagine glycosylation. Ca(2+) is bound by residues G543, G545, and D547.

Ca(2+) is required as a cofactor.

Its subcellular location is the secreted. It localises to the extracellular space. It catalyses the reaction Release of an N-terminal tripeptide from a polypeptide.. Its function is as follows. Secreted tripeptidyl-peptidase which degrades proteins at acidic pHs and is involved in virulence. This is Tripeptidyl-peptidase sed5 (sed5) from Aspergillus fumigatus (strain ATCC MYA-4609 / CBS 101355 / FGSC A1100 / Af293) (Neosartorya fumigata).